We begin with the raw amino-acid sequence, 393 residues long: Formate-dependent phosphoribosylglycinamide formyltransferase (393 aa).

N(1)-(5-phospho-beta-D-ribosyl)glycinamide-binding positions include 22-23 (EL) and E82. ATP is bound by residues R114, K155, 160–165 (SSGKGQ), 195–198 (EGFV), and E203. Positions 119-308 (RLAAEELGLP…EFALHVRAIL (190 aa)) constitute an ATP-grasp domain. Positions 267 and 279 each coordinate Mg(2+). Residues D286, K356, and 363–364 (RR) contribute to the N(1)-(5-phospho-beta-D-ribosyl)glycinamide site.

It belongs to the PurK/PurT family. In terms of assembly, homodimer.

It carries out the reaction N(1)-(5-phospho-beta-D-ribosyl)glycinamide + formate + ATP = N(2)-formyl-N(1)-(5-phospho-beta-D-ribosyl)glycinamide + ADP + phosphate + H(+). Its pathway is purine metabolism; IMP biosynthesis via de novo pathway; N(2)-formyl-N(1)-(5-phospho-D-ribosyl)glycinamide from N(1)-(5-phospho-D-ribosyl)glycinamide (formate route): step 1/1. In terms of biological role, involved in the de novo purine biosynthesis. Catalyzes the transfer of formate to 5-phospho-ribosyl-glycinamide (GAR), producing 5-phospho-ribosyl-N-formylglycinamide (FGAR). Formate is provided by PurU via hydrolysis of 10-formyl-tetrahydrofolate. The chain is Formate-dependent phosphoribosylglycinamide formyltransferase from Nitratidesulfovibrio vulgaris (strain ATCC 29579 / DSM 644 / CCUG 34227 / NCIMB 8303 / VKM B-1760 / Hildenborough) (Desulfovibrio vulgaris).